The primary structure comprises 210 residues: MISYLKGNPIETLKNTQNRILLILEVNQVGYEMQIPSRFARELSQNPRETLQVFTHLQVKDEQPILYGFATAAERELFRQLVSVSGIGAQLAIALIDTLGLEELVQAIVNGNIRTLSQTPGVGQKTAERIALELKTKLSQWRKLVGITLPSTSAIPSLEVLEDVEMTLLALGYTNEEINKAISTLSQDNQMLKNTNSEEWIREAIAWLSQ.

The domain I stretch occupies residues 1 to 70 (MISYLKGNPI…DEQPILYGFA (70 aa)). Residues 71–149 (TAAERELFRQ…QWRKLVGITL (79 aa)) are domain II. The interval 150–160 (PSTSAIPSLEV) is flexible linker. The segment at 160–210 (VLEDVEMTLLALGYTNEEINKAISTLSQDNQMLKNTNSEEWIREAIAWLSQ) is domain III.

The protein belongs to the RuvA family. In terms of assembly, homotetramer. Forms an RuvA(8)-RuvB(12)-Holliday junction (HJ) complex. HJ DNA is sandwiched between 2 RuvA tetramers; dsDNA enters through RuvA and exits via RuvB. An RuvB hexamer assembles on each DNA strand where it exits the tetramer. Each RuvB hexamer is contacted by two RuvA subunits (via domain III) on 2 adjacent RuvB subunits; this complex drives branch migration. In the full resolvosome a probable DNA-RuvA(4)-RuvB(12)-RuvC(2) complex forms which resolves the HJ.

It is found in the cytoplasm. Functionally, the RuvA-RuvB-RuvC complex processes Holliday junction (HJ) DNA during genetic recombination and DNA repair, while the RuvA-RuvB complex plays an important role in the rescue of blocked DNA replication forks via replication fork reversal (RFR). RuvA specifically binds to HJ cruciform DNA, conferring on it an open structure. The RuvB hexamer acts as an ATP-dependent pump, pulling dsDNA into and through the RuvAB complex. HJ branch migration allows RuvC to scan DNA until it finds its consensus sequence, where it cleaves and resolves the cruciform DNA. This Rippkaea orientalis (strain PCC 8801 / RF-1) (Cyanothece sp. (strain PCC 8801)) protein is Holliday junction branch migration complex subunit RuvA.